Here is a 149-residue protein sequence, read N- to C-terminus: Lipoprotein signal peptidase (149 aa).

2 consecutive transmembrane segments (helical) span residues 58-78 (WFFIAITAVVVIGIVISLIRL) and 85-105 (ASLALSFVLGGAVGNFIDRAM). Active-site residues include D111 and D127. A helical transmembrane segment spans residues 122–142 (IFNVADMAITIGVGILLLDVF).

This sequence belongs to the peptidase A8 family.

Its subcellular location is the cell membrane. The enzyme catalyses Release of signal peptides from bacterial membrane prolipoproteins. Hydrolyzes -Xaa-Yaa-Zaa-|-(S,diacylglyceryl)Cys-, in which Xaa is hydrophobic (preferably Leu), and Yaa (Ala or Ser) and Zaa (Gly or Ala) have small, neutral side chains.. It functions in the pathway protein modification; lipoprotein biosynthesis (signal peptide cleavage). Functionally, this protein specifically catalyzes the removal of signal peptides from prolipoproteins. The protein is Lipoprotein signal peptidase of Brevibacillus brevis (strain 47 / JCM 6285 / NBRC 100599).